The sequence spans 209 residues: Proteasome subunit beta (209 aa).

Positions 1-10 are cleaved as a propeptide — removed in mature form; by autocatalysis; sequence MVEQSDTMKG. The active-site Nucleophile is the T11.

Belongs to the peptidase T1B family. The 20S proteasome core is composed of 14 alpha and 14 beta subunits that assemble into four stacked heptameric rings, resulting in a barrel-shaped structure. The two inner rings, each composed of seven catalytic beta subunits, are sandwiched by two outer rings, each composed of seven alpha subunits. The catalytic chamber with the active sites is on the inside of the barrel. Has a gated structure, the ends of the cylinder being occluded by the N-termini of the alpha-subunits. Is capped at one or both ends by the proteasome regulatory ATPase, PAN.

The protein localises to the cytoplasm. The catalysed reaction is Cleavage of peptide bonds with very broad specificity.. With respect to regulation, the formation of the proteasomal ATPase PAN-20S proteasome complex, via the docking of the C-termini of PAN into the intersubunit pockets in the alpha-rings, triggers opening of the gate for substrate entry. Interconversion between the open-gate and close-gate conformations leads to a dynamic regulation of the 20S proteasome proteolysis activity. Functionally, component of the proteasome core, a large protease complex with broad specificity involved in protein degradation. In Methanospirillum hungatei JF-1 (strain ATCC 27890 / DSM 864 / NBRC 100397 / JF-1), this protein is Proteasome subunit beta.